The sequence spans 391 residues: Paired box protein Pax-5 (391 aa).

The paired DNA-binding region spans 16–142 (GHGGVNQLGG…SSINRIIRTK (127 aa)). Positions 19 to 75 (GVNQLGGVFVNGRPLPDVVRQRIVELAHQGVRPCDISRQLRVSHGCVSKILGRYYET) are PAI subdomain. The tract at residues 94–142 (KVVEKIAEYKRQNPTMFAWEIRDRLLAERVCDNDTVPSVSSINRIIRTK) is RED subdomain. The disordered stretch occupies residues 182-218 (SGILGITSPSADTNKRKRDEGIQESPVPNGHSLPGRD).

In terms of assembly, interacts with ETS1; this interaction alters PAX5 DNA-binding properties. Binds DNA as a monomer. Interacts with TBP; this interaction allows PAX5 to interact with the basal transcription machinery. Interacts with RB1. Interacts with TLE4. Interacts with DAXX. O-glycosylated. In terms of processing, phosphorylated by SYK. This phosphorylation plays an important role in the abolition of BLIMP1 repression by PAX5 in order to trigger plasma cell differentiation. Expressed in all B-lymphoid organs, in the embryonic midbrain and in adult testis.

Its subcellular location is the nucleus. Transcription factor that plays an essential role in commitment of lymphoid progenitors to the B-lymphocyte lineage. Fulfills a dual role by repressing B-lineage inappropriate genes and simultaneously activating B-lineage-specific genes. In turn, regulates cell adhesion and migration, induces V(H)-to-D(H)J(H) recombination, facilitates pre-B-cell receptor signaling and promotes development to the mature B-cell stage. Repression of the cohesin-release factor WAPL causes global changes of the chromosomal architecture in pro-B cells to facilitate the generation of a diverse antibody repertoire. In Mus musculus (Mouse), this protein is Paired box protein Pax-5 (Pax5).